A 159-amino-acid polypeptide reads, in one-letter code: Putative pre-16S rRNA nuclease (159 aa).

Belongs to the YqgF nuclease family.

Its subcellular location is the cytoplasm. Could be a nuclease involved in processing of the 5'-end of pre-16S rRNA. The polypeptide is Putative pre-16S rRNA nuclease (Agrobacterium fabrum (strain C58 / ATCC 33970) (Agrobacterium tumefaciens (strain C58))).